The sequence spans 170 residues: ATP synthase subunit b (170 aa).

A helical transmembrane segment spans residues 11–31; sequence AFTFGDAFFTLFAFAILLVLI.

It belongs to the ATPase B chain family. As to quaternary structure, F-type ATPases have 2 components, F(1) - the catalytic core - and F(0) - the membrane proton channel. F(1) has five subunits: alpha(3), beta(3), gamma(1), delta(1), epsilon(1). F(0) has three main subunits: a(1), b(2) and c(10-14). The alpha and beta chains form an alternating ring which encloses part of the gamma chain. F(1) is attached to F(0) by a central stalk formed by the gamma and epsilon chains, while a peripheral stalk is formed by the delta and b chains.

The protein localises to the cell membrane. Functionally, f(1)F(0) ATP synthase produces ATP from ADP in the presence of a proton or sodium gradient. F-type ATPases consist of two structural domains, F(1) containing the extramembraneous catalytic core and F(0) containing the membrane proton channel, linked together by a central stalk and a peripheral stalk. During catalysis, ATP synthesis in the catalytic domain of F(1) is coupled via a rotary mechanism of the central stalk subunits to proton translocation. Component of the F(0) channel, it forms part of the peripheral stalk, linking F(1) to F(0). The sequence is that of ATP synthase subunit b from Listeria innocua serovar 6a (strain ATCC BAA-680 / CLIP 11262).